A 365-amino-acid polypeptide reads, in one-letter code: Transcription factor KUA1 (365 aa).

Positions methionine 1–arginine 21 are disordered. Residues arginine 3–asparagine 20 form a CCHC-type zinc finger. Polar residues predominate over residues cysteine 8–cysteine 18. The short motif at lysine 24–valine 28 is the R/KLFGV (transcriptional repression) element. A disordered region spans residues methionine 41–threonine 99. In terms of domain architecture, HTH myb-type spans arginine 90–serine 146. Residues tryptophan 118–phenylalanine 142 constitute a DNA-binding region (H-T-H motif). 2 disordered regions span residues serine 214 to leucine 254 and glutamate 321 to leucine 365. The segment covering serine 220 to leucine 254 has biased composition (low complexity). Residues arginine 343–serine 355 are compositionally biased toward polar residues.

As to expression, expressed ubiquitously, except in hypocotyls, root tips and lateral root primordia.

It localises to the nucleus. Transcriptional repressor. Direct regulator of the transcription of peroxidase (Prxs) and reactive oxygen species (ROS)-related genes via the recognition of 5'-ATCACA-3' motif. Binds to 5'-TATCCA-3' motif (TA box) and represses the activity of corresponding promoters (e.g. sugar response genes). Regulates hypocotyl elongation in response to darkness by enhancing auxin accumulation in a phytochrome-interacting factor (PIF) proteins-dependent manner. Promotes lateral roots formation. Promotes cell expansion during leaves development via the modulation of cell wall-located Prxs. Plays a critical role in developmentally regulated and dark-induced onset of leaf senescence by repressing the transcription of several genes involved in chloroplast function and responses to light and auxin. Promotes responses to auxin, abscisic acid (ABA), and ethylene. In Arabidopsis thaliana (Mouse-ear cress), this protein is Transcription factor KUA1.